Reading from the N-terminus, the 474-residue chain is A-type ATP synthase subunit B (474 aa).

It belongs to the ATPase alpha/beta chains family. As to quaternary structure, has multiple subunits with at least A(3), B(3), C, D, E, F, H, I and proteolipid K(x).

The protein resides in the cell membrane. Functionally, component of the A-type ATP synthase that produces ATP from ADP in the presence of a proton gradient across the membrane. The B chain is a regulatory subunit. The chain is A-type ATP synthase subunit B from Halorubrum lacusprofundi (strain ATCC 49239 / DSM 5036 / JCM 8891 / ACAM 34).